Reading from the N-terminus, the 230-residue chain is Ribonuclease 3 (230 aa).

Positions 10 to 133 (DPRLLSRIGY…IIGAIYLDSG (124 aa)) constitute an RNase III domain. Residue Glu-46 coordinates Mg(2+). Asp-50 is an active-site residue. Positions 119 and 122 each coordinate Mg(2+). Residue Glu-122 is part of the active site. In terms of domain architecture, DRBM spans 161-230 (DPKSRLQEYL…AAEILKLLEQ (70 aa)).

Belongs to the ribonuclease III family. As to quaternary structure, homodimer. It depends on Mg(2+) as a cofactor.

The protein localises to the cytoplasm. The enzyme catalyses Endonucleolytic cleavage to 5'-phosphomonoester.. Digests double-stranded RNA. Involved in the processing of primary rRNA transcript to yield the immediate precursors to the large and small rRNAs (23S and 16S). Processes some mRNAs, and tRNAs when they are encoded in the rRNA operon. Processes pre-crRNA and tracrRNA of type II CRISPR loci if present in the organism. This chain is Ribonuclease 3 (rnc), found in Acinetobacter pittii (strain PHEA-2).